A 578-amino-acid polypeptide reads, in one-letter code: Proline--tRNA ligase (578 aa).

The protein belongs to the class-II aminoacyl-tRNA synthetase family. ProS type 1 subfamily. In terms of assembly, homodimer.

The protein resides in the cytoplasm. The catalysed reaction is tRNA(Pro) + L-proline + ATP = L-prolyl-tRNA(Pro) + AMP + diphosphate. Its function is as follows. Catalyzes the attachment of proline to tRNA(Pro) in a two-step reaction: proline is first activated by ATP to form Pro-AMP and then transferred to the acceptor end of tRNA(Pro). As ProRS can inadvertently accommodate and process non-cognate amino acids such as alanine and cysteine, to avoid such errors it has two additional distinct editing activities against alanine. One activity is designated as 'pretransfer' editing and involves the tRNA(Pro)-independent hydrolysis of activated Ala-AMP. The other activity is designated 'posttransfer' editing and involves deacylation of mischarged Ala-tRNA(Pro). The misacylated Cys-tRNA(Pro) is not edited by ProRS. The protein is Proline--tRNA ligase of Paraburkholderia phymatum (strain DSM 17167 / CIP 108236 / LMG 21445 / STM815) (Burkholderia phymatum).